The chain runs to 195 residues: Inner membrane-spanning protein YciB (195 aa).

The next 5 helical transmembrane spans lie at 34-54, 65-85, 88-108, 131-151, and 160-180; these read IYGA…ALWL, FTLG…EDTF, WKAP…HFIG, LNIA…YVVF, and FKVF…GLFL.

The protein belongs to the YciB family.

The protein resides in the cell inner membrane. In terms of biological role, plays a role in cell envelope biogenesis, maintenance of cell envelope integrity and membrane homeostasis. The protein is Inner membrane-spanning protein YciB of Pseudomonas aeruginosa (strain LESB58).